The following is a 296-amino-acid chain: Probable alpha-L-glutamate ligase (296 aa).

The region spanning 104 to 287 (LQLLARQGID…IATLMITFIE (184 aa)) is the ATP-grasp domain. Residues K141, 178 to 179 (EF), D187, and 211 to 213 (RSN) each bind ATP. Mg(2+) is bound by residues D248, E260, and N262. D248, E260, and N262 together coordinate Mn(2+).

This sequence belongs to the RimK family. Mg(2+) serves as cofactor. Requires Mn(2+) as cofactor.

The chain is Probable alpha-L-glutamate ligase from Sodalis glossinidius (strain morsitans).